A 93-amino-acid chain; its full sequence is Large ribosomal subunit protein uL23 (93 aa).

The protein belongs to the universal ribosomal protein uL23 family. Part of the 50S ribosomal subunit. Contacts protein L29, and trigger factor when it is bound to the ribosome.

Functionally, one of the early assembly proteins it binds 23S rRNA. One of the proteins that surrounds the polypeptide exit tunnel on the outside of the ribosome. Forms the main docking site for trigger factor binding to the ribosome. The protein is Large ribosomal subunit protein uL23 of Campylobacter fetus subsp. fetus (strain 82-40).